Here is a 197-residue protein sequence, read N- to C-terminus: Putative carbonic anhydrase YvdA (197 aa).

4 residues coordinate Zn(2+): cysteine 41, aspartate 43, histidine 99, and cysteine 102.

This sequence belongs to the beta-class carbonic anhydrase family. Zn(2+) serves as cofactor.

It carries out the reaction hydrogencarbonate + H(+) = CO2 + H2O. Its function is as follows. Reversible hydration of carbon dioxide. This chain is Putative carbonic anhydrase YvdA (yvdA), found in Bacillus subtilis (strain 168).